The following is a 419-amino-acid chain: Gamma-glutamyl phosphate reductase (419 aa).

The protein belongs to the gamma-glutamyl phosphate reductase family.

The protein resides in the cytoplasm. The enzyme catalyses L-glutamate 5-semialdehyde + phosphate + NADP(+) = L-glutamyl 5-phosphate + NADPH + H(+). It participates in amino-acid biosynthesis; L-proline biosynthesis; L-glutamate 5-semialdehyde from L-glutamate: step 2/2. Its function is as follows. Catalyzes the NADPH-dependent reduction of L-glutamate 5-phosphate into L-glutamate 5-semialdehyde and phosphate. The product spontaneously undergoes cyclization to form 1-pyrroline-5-carboxylate. This chain is Gamma-glutamyl phosphate reductase, found in Nitratidesulfovibrio vulgaris (strain ATCC 29579 / DSM 644 / CCUG 34227 / NCIMB 8303 / VKM B-1760 / Hildenborough) (Desulfovibrio vulgaris).